Consider the following 454-residue polypeptide: UPF0210 protein BL1209 (454 aa).

The protein belongs to the UPF0210 family. As to quaternary structure, homodimer.

The polypeptide is UPF0210 protein BL1209 (Bifidobacterium longum (strain NCC 2705)).